Consider the following 187-residue polypeptide: Flavin prenyltransferase LpdB (187 aa).

FMN-binding positions include 10–12 (GAS), serine 37, 88–91 (SMKT), and arginine 123. Tyrosine 153 and lysine 169 together coordinate dimethylallyl phosphate.

The protein belongs to the UbiX/PAD1 family.

It carries out the reaction dimethylallyl phosphate + FMNH2 = prenylated FMNH2 + phosphate. Involved in tannin degradation. Flavin prenyltransferase that catalyzes the synthesis of the prenylated FMN cofactor (prenyl-FMN) for gallate decarboxylase LpdC. The prenyltransferase is metal-independent and links a dimethylallyl moiety from dimethylallyl monophosphate (DMAP) to the flavin N5 and C6 atoms of FMN. This chain is Flavin prenyltransferase LpdB, found in Lactiplantibacillus plantarum (strain ATCC BAA-793 / NCIMB 8826 / WCFS1) (Lactobacillus plantarum).